Here is a 593-residue protein sequence, read N- to C-terminus: Gamma-humulene synthase (593 aa).

Positions 1–26 (MAQISESVSPSTDLKSTESSITSNRH) are enriched in polar residues. The segment at 1-34 (MAQISESVSPSTDLKSTESSITSNRHGNMWEDDR) is disordered. Residues D343, D347, D488, and E496 each coordinate Mg(2+). Residues 343 to 347 (DDLYD) carry the DDXXD motif motif.

It belongs to the terpene synthase family. Tpsd subfamily. It depends on Mg(2+) as a cofactor. Requires K(+) as cofactor.

It is found in the cytoplasm. The catalysed reaction is (2E,6E)-farnesyl diphosphate = gamma-humulene + diphosphate. The enzyme catalyses (2E,6E)-farnesyl diphosphate = sibirene + diphosphate. It carries out the reaction (2E,6E)-farnesyl diphosphate = longifolene + diphosphate. It catalyses the reaction (2E,6E)-farnesyl diphosphate = beta-himachalene + diphosphate. The catalysed reaction is (2E,6E)-farnesyl diphosphate = gamma-himachalene + diphosphate. The enzyme catalyses (2E,6E)-farnesyl diphosphate = alpha-himachalene + diphosphate. It participates in terpene metabolism; oleoresin biosynthesis. Functionally, involved in defensive oleoresin formation in conifers in response to insect attack or other injury. Involved in 52 sesquiterpene (C15) olefins biosynthesis. The chain is Gamma-humulene synthase (ag5) from Abies grandis (Grand fir).